Here is a 312-residue protein sequence, read N- to C-terminus: Homoserine O-succinyltransferase (312 aa).

Catalysis depends on Cys142, which acts as the Acyl-thioester intermediate. Substrate is bound by residues Lys163 and Ser192. Residue His235 is the Proton acceptor of the active site. Glu237 is a catalytic residue. Position 249 (Arg249) interacts with substrate.

It belongs to the MetA family.

It is found in the cytoplasm. It carries out the reaction L-homoserine + succinyl-CoA = O-succinyl-L-homoserine + CoA. The protein operates within amino-acid biosynthesis; L-methionine biosynthesis via de novo pathway; O-succinyl-L-homoserine from L-homoserine: step 1/1. In terms of biological role, transfers a succinyl group from succinyl-CoA to L-homoserine, forming succinyl-L-homoserine. The polypeptide is Homoserine O-succinyltransferase (Alteromonas mediterranea (strain DSM 17117 / CIP 110805 / LMG 28347 / Deep ecotype)).